Here is a 276-residue protein sequence, read N- to C-terminus: Lectin-like protein At3g16530 (276 aa).

The N-terminal stretch at 1 to 19 (MQIHKLCFLVLFLANAAFA) is a signal peptide. The legume-lectin like stretch occupies residues 20-270 (VKFNFDSFDG…RHDIWSWSFE (251 aa)). N-linked (GlcNAc...) asparagine glycans are attached at residues asparagine 79, asparagine 129, and asparagine 196.

This sequence belongs to the leguminous lectin family.

The protein resides in the secreted. The protein localises to the extracellular space. It is found in the apoplast. The protein is Lectin-like protein At3g16530 of Arabidopsis thaliana (Mouse-ear cress).